Consider the following 2176-residue polypeptide: MSNVHQFDTQTMAESPQIRRDMGRLCATWPSKDSEDGAGTALRAATPLTANGATTTGLSVTLAPKDMQRNHLLKMPTATIEKPTITATIASSSSTSTSTTRKSVTATRSLKLNPNILLPTLRILARGLLLPALILAILVGSSQAGFACLSNPCVFGVCIDGLNSSYSCYCIDGYTGIQCQTNWDECWSSPCQNGGTCVDGVAYYNCTCPEGFSGSNCEENVDECMSNPCQNGGLCRDRTNGYICTCQPGYLGSHCELDVAVCETGTGARCQHGGECIEGPGLEFTCDCPAGWHGRICQEEINECASSPCQNGGVCVDKLAAYACACPMGYTGINCEEEILICADNPCQNNALCLMEEGVPTCYCVPDYHGEKCEFQYDECQLGPRCMNGGVCIDGVDTFSCSCPPLLTGMLCECLMVGEESLDCNYTAPATQSPPRRTTTTSTMAPPTVRPVTPPETTVSPSRASEEVEIIVVTTSAPAEVVTSVLSPSSSSSSSEEGVSVEIKTPTVAPPESGSHSISVEQTTAVPAQPEPESEQEPESKPHPESESASESETETEEEIIPGTTARPPTSRSSSSSEESPSIFTTLPPLPGKPQTSASSESSGEVVTSEEYTTVPHFEVSGSKSESGSEEVTTVRPTAAPSITISVDITSSGSSSSSSESVEVFTTPAPVFVQRVTTIETSISIDYVTPTPLPETTTPRVVPVPRPTFAPEPPLDVVETTASTHHLWTEVPTTAAPFFTEYPAEVLITTHRTSAGRFTTVQPPAGVTTTSPTEDSSVELPTPHTPQIVVTILDSNEVIPSLITTTGSPTTHHHHHHHPHHEAEGTTLQPLEEDEHHHHHHHDEFTTPQPVEITTGHPLQTEDLIGVQEPAVVTTESPFAPAETTVVPVVVPATIAPLGTAAPPATPAPVPPATTTPPPSPPSLATETPTLPPTLPPVTLPPVTQPPPTIPPTPPSTQSAQTLPPPTSAINVYTTPDGPPTASQTKPSVTESSEEVEGTNTVSTGGRGSGGVPEEKAGDVDCIKLGCYNGGTCVTTSEGSRCVCRFDRQGPLCELPIIIRNAAFSGDSYVSHRIYKDIGGHESLDAVLPMHIQLKVRTRATNGLIMLAAAQGTKGGHYMALFLQKGLMQFQFSCGLQTMLLSELETPVNTGHEITIRAELDFSRNYTHCNASLLVNDTLAMSGDQPTWLKLLPPRLHTPEAILNTWLHLGGAPQAPIGLIIELPPAQSGSGFTGCLHTLRINGQAREIFGDALDGFGITECGSLACLSSPCRNGAACIKIETNDLDENGEKAEKWKCKCPTGYMGPTCEISVCEDNPCQYGGTCVQFPGSGYLCLCPLGKHGHYCEHNLEVALPSFSGSVNGLSSFVAYTVPIPLEYSLELSFKILPQTMSQISLLAFFGQSGYHDEKSDHLAVSFIQGYIMLTWNLGAGPRRIFTQKPIDFRLDAPRVPYEIKVGRIGRQAWLSVDGKFNITGRSPGSGSRMDVLPILYLGGHEIANFNTLPHDLPLHSGFQGCIYDVQLKAGQVTVPLQETRGVRGRGVGQCGTRECHRHACQHDGACLQHGATFTCICQEGWYGPLCAQPTNPCDSFNNKCYEDATCVPLVNGYECDCPVGRTGKNCEEVIRSLSDVSLTGRRSYLAVRWPYLYDGGDKLGAKRSQMVSYRNFTKKLMPPKPITTPSSHFVMKLLNEVEKQRSFSPVPLMGSKSFEEHHRVQFFFIEFQLRPLSERGLLLYFGTLNNNQDKKIGFVSLSLQGGVVEFRISGPSNHVTVVRSVRMLAIGEWHKIKMAQRGRWLTLWVEGSASSALAPSAEVLVEPDSLLYIGGLKDVSKLPHNAISGFPIPFRGCVRGLVVSGTRIVLNETNIVESRNIRDCDGTACGGDSCESGGHCWLDEKLQPHCICPEYAKGDRCEYSETCKLIPCKNNGRCLRSGRCSCPNGWGGFYCEIAMSKPTTPSFRGNSYLILPPPRIPMKDKRRGPSLYVRPREAIQVSLNFSTIEPDGLLLWSEHERSKFLGLGLEAGHLKLASNLLGSTNDTVRAPASGFIADGAWHWTSVLLDRSRLELQLDGEVIFTERLPEGGRSLGSTTPRSTLAGRRKNSSKEPTISYEDVFYLGGFPNSDSVSRRTKGRFFDPFKGCLQDIQFGAEPTAIISDFSTYQGENIGSCDLHGDEPLTV.

Over 1–122 the chain is Cytoplasmic; it reads MSNVHQFDTQ…NPNILLPTLR (122 aa). A helical transmembrane segment spans residues 123-143; sequence ILARGLLLPALILAILVGSSQ. In terms of domain architecture, EGF-like 1 spans 144-180; it reads AGFACLSNPCVFGVCIDGLNSSYSCYCIDGYTGIQCQ. At 144-2176 the chain is on the extracellular side; that stretch reads AGFACLSNPC…DLHGDEPLTV (2033 aa). Intrachain disulfides connect cysteine 148/cysteine 158, cysteine 153/cysteine 168, cysteine 170/cysteine 179, cysteine 186/cysteine 197, cysteine 191/cysteine 206, cysteine 208/cysteine 217, cysteine 224/cysteine 235, cysteine 229/cysteine 244, cysteine 246/cysteine 255, cysteine 262/cysteine 276, cysteine 270/cysteine 286, cysteine 288/cysteine 297, cysteine 304/cysteine 315, cysteine 309/cysteine 324, cysteine 326/cysteine 335, cysteine 342/cysteine 353, cysteine 347/cysteine 362, cysteine 364/cysteine 373, cysteine 380/cysteine 392, cysteine 386/cysteine 401, and cysteine 403/cysteine 412. The N-linked (GlcNAc...) asparagine glycan is linked to asparagine 163. In terms of domain architecture, EGF-like 2; calcium-binding spans 182–218; that stretch reads NWDECWSSPCQNGGTCVDGVAYYNCTCPEGFSGSNCE. Asparagine 205 is a glycosylation site (N-linked (GlcNAc...) asparagine). Residues 220-256 enclose the EGF-like 3; calcium-binding domain; it reads NVDECMSNPCQNGGLCRDRTNGYICTCQPGYLGSHCE. An EGF-like 4 domain is found at 258–298; sequence DVAVCETGTGARCQHGGECIEGPGLEFTCDCPAGWHGRICQ. The 37-residue stretch at 300 to 336 folds into the EGF-like 5; calcium-binding domain; that stretch reads EINECASSPCQNGGVCVDKLAAYACACPMGYTGINCE. The region spanning 338-374 is the EGF-like 6 domain; sequence EILICADNPCQNNALCLMEEGVPTCYCVPDYHGEKCE. An EGF-like 7; calcium-binding domain is found at 376 to 413; sequence QYDECQLGPRCMNGGVCIDGVDTFSCSCPPLLTGMLCE. The N-linked (GlcNAc...) asparagine glycan is linked to asparagine 425. Low complexity-rich tracts occupy residues 429-447 and 482-502; these read PATQ…MAPP and VTSV…VSVE. Disordered stretches follow at residues 429–465, 482–639, 757–783, 802–854, and 902–1014; these read PATQ…SRAS, VTSV…RPTA, RFTT…LPTP, LITT…VEIT, and APPA…GVPE. A compositionally biased stretch (polar residues) spans 514–526; sequence GSHSISVEQTTAV. The span at 548–560 shows a compositional bias: acidic residues; sequence SASESETETEEEI. Composition is skewed to low complexity over residues 564–582 and 596–632; these read TTAR…ESPS and TSAS…SEEV. Residues 757 to 775 are compositionally biased toward polar residues; the sequence is RFTTVQPPAGVTTTSPTED. The span at 811 to 820 shows a compositional bias: basic residues; that stretch reads THHHHHHHPH. 2 stretches are compositionally biased toward pro residues: residues 904 to 922 and 930 to 955; these read PATP…PSPP and TLPP…PTPP. The 37-residue stretch at 1018 to 1054 folds into the EGF-like 8 domain; the sequence is GDVDCIKLGCYNGGTCVTTSEGSRCVCRFDRQGPLCE. Cystine bridges form between cysteine 1022–cysteine 1033, cysteine 1027–cysteine 1042, and cysteine 1044–cysteine 1053. One can recognise a Laminin G-like 1 domain in the interval 1059-1266; sequence IRNAAFSGDS…GITECGSLAC (208 aa). N-linked (GlcNAc...) asparagine glycans are attached at residues asparagine 1165, asparagine 1170, and asparagine 1176. The 38-residue stretch at 1309–1346 folds into the EGF-like 9 domain; that stretch reads EISVCEDNPCQYGGTCVQFPGSGYLCLCPLGKHGHYCE. 3 disulfide bridges follow: cysteine 1313-cysteine 1324, cysteine 1318-cysteine 1334, and cysteine 1336-cysteine 1345. The Laminin G-like 2 domain occupies 1353 to 1549; it reads LPSFSGSVNG…GVGQCGTREC (197 aa). An N-linked (GlcNAc...) asparagine glycan is attached at asparagine 1471. EGF-like domains follow at residues 1545–1581 and 1583–1621; these read GTRE…PLCA and PTNP…KNCE. 6 disulfides stabilise this stretch: cysteine 1549–cysteine 1560, cysteine 1554–cysteine 1569, cysteine 1571–cysteine 1580, cysteine 1587–cysteine 1600, cysteine 1594–cysteine 1609, and cysteine 1611–cysteine 1620. N-linked (GlcNAc...) asparagine glycosylation is found at asparagine 1665 and asparagine 1861. One can recognise a Laminin G-like 3 domain in the interval 1692–1879; the sequence is EKQRSFSPVP…NIRDCDGTAC (188 aa). 2 consecutive EGF-like domains span residues 1875–1912 and 1913–1946; these read DGTA…DRCE and YSET…FYCE. 6 disulfide bridges follow: cysteine 1879–cysteine 1890, cysteine 1884–cysteine 1900, cysteine 1902–cysteine 1911, cysteine 1917–cysteine 1928, cysteine 1922–cysteine 1934, and cysteine 1936–cysteine 1945. Residues 1952-2166 form the Laminin G-like 4 domain; that stretch reads PTTPSFRGNS…TYQGENIGSC (215 aa). Asparagine 1994, asparagine 2035, and asparagine 2099 each carry an N-linked (GlcNAc...) asparagine glycan. The tract at residues 2080-2101 is disordered; the sequence is GGRSLGSTTPRSTLAGRRKNSS.

Belongs to the EYS family. In terms of tissue distribution, expressed from the beginning of rhabdomere biogenesis (48 hours after pupal formation), when it decorates the entire photoreceptor apical surface.

Its subcellular location is the membrane. The protein localises to the secreted. Essential for the formation of matrix-filled interrhabdomeral space: critical for the formation of epithelial lumina in the retina. Acts together with prominin (prom) and the cell adhesion molecule chaoptin (chp) to choreograph the partitioning of rhabdomeres into an open system. This Drosophila melanogaster (Fruit fly) protein is Protein eyes shut.